The sequence spans 309 residues: uncharacterized protein (309 aa).

Residues 23–43 traverse the membrane as a helical segment; sequence ALVLSSIVNILLLLLIYSTVF.

Belongs to the chlamydial CPn_0593/CT_474/TC_0759 family.

It localises to the membrane. This is an uncharacterized protein from Chlamydia trachomatis serovar D (strain ATCC VR-885 / DSM 19411 / UW-3/Cx).